A 215-amino-acid polypeptide reads, in one-letter code: MKLFIDTANVDEIRKANDMGIICGVTTNPSLIAKEGRNFKEVVKEITDIVDGPISAEVISLEWKEMVKEARELVKIHKNIVIKIPMTQEGLKAVKVLSQEEIKTNVTLIFSAAQALLAAKAGASYVSPFLGRLDDVGMDGIKLIEEIVTIFKVQNIVTEIIAASIRGPIHVVKCAALGSHIATVPYKVLVQMCKHPLTDIGIERFLKDWESVPDK.

Catalysis depends on Lys83, which acts as the Schiff-base intermediate with substrate.

Belongs to the transaldolase family. Type 3B subfamily.

Its subcellular location is the cytoplasm. It catalyses the reaction D-sedoheptulose 7-phosphate + D-glyceraldehyde 3-phosphate = D-erythrose 4-phosphate + beta-D-fructose 6-phosphate. It functions in the pathway carbohydrate degradation; pentose phosphate pathway; D-glyceraldehyde 3-phosphate and beta-D-fructose 6-phosphate from D-ribose 5-phosphate and D-xylulose 5-phosphate (non-oxidative stage): step 2/3. Functionally, transaldolase is important for the balance of metabolites in the pentose-phosphate pathway. The polypeptide is Probable transaldolase (Clostridium kluyveri (strain NBRC 12016)).